The primary structure comprises 808 residues: Protein tortoise (808 aa).

A coiled-coil region spans residues 43–78 (KDRKELYSLNNDSIKKKLNQLKDETNQLLKERGEEL). A disordered region spans residues 152–171 (LTSGGANKKKSPFLEDNNNK). Positions 694–733 (EDLDFQIEELELMIKNKKILEREIKAHNEKISKIIKDSRD) form a coiled coil.

It is found in the mitochondrion. Required for efficient chemotaxis. The chain is Protein tortoise (torA) from Dictyostelium discoideum (Social amoeba).